Reading from the N-terminus, the 522-residue chain is Peptide chain release factor 3 (522 aa).

The tr-type G domain maps to 10–277 (ASRKTFAIIS…TFVDFAPSPS (268 aa)). GTP-binding positions include 19–26 (SHPDAGKT), 87–91 (DTPGH), and 141–144 (NKMD).

Belongs to the TRAFAC class translation factor GTPase superfamily. Classic translation factor GTPase family. PrfC subfamily.

The protein resides in the cytoplasm. Its function is as follows. Increases the formation of ribosomal termination complexes and stimulates activities of RF-1 and RF-2. It binds guanine nucleotides and has strong preference for UGA stop codons. It may interact directly with the ribosome. The stimulation of RF-1 and RF-2 is significantly reduced by GTP and GDP, but not by GMP. This is Peptide chain release factor 3 from Listeria monocytogenes serotype 4b (strain F2365).